The chain runs to 73 residues: Putative sodium channel toxin Ts39 (73 aa).

The first 22 residues, 1-22 (MKTLNFCLFLVIISSLTVRVFC), serve as a signal peptide directing secretion. The LCN-type CS-alpha/beta domain occupies 24–73 (NDRFLTVNDNYVICLYINKSFVNCENLCKAYMNAKDGFCRQPHCFCTDVE). 3 cysteine pairs are disulfide-bonded: Cys37/Cys62, Cys47/Cys67, and Cys51/Cys69.

This sequence belongs to the long (3 C-C) scorpion toxin superfamily. Sodium channel inhibitor family. Expressed by the venom gland.

The protein localises to the secreted. Putative sodium channel toxin. The protein is Putative sodium channel toxin Ts39 of Tityus serrulatus (Brazilian scorpion).